The chain runs to 274 residues: Large ribosomal subunit protein uL2 (274 aa).

A disordered region spans residues Ala-224–Lys-254. The segment covering Asp-229–Thr-239 has biased composition (basic and acidic residues).

It belongs to the universal ribosomal protein uL2 family. Part of the 50S ribosomal subunit. Forms a bridge to the 30S subunit in the 70S ribosome.

Functionally, one of the primary rRNA binding proteins. Required for association of the 30S and 50S subunits to form the 70S ribosome, for tRNA binding and peptide bond formation. It has been suggested to have peptidyltransferase activity; this is somewhat controversial. Makes several contacts with the 16S rRNA in the 70S ribosome. In Leptothrix cholodnii (strain ATCC 51168 / LMG 8142 / SP-6) (Leptothrix discophora (strain SP-6)), this protein is Large ribosomal subunit protein uL2.